Consider the following 426-residue polypeptide: Serine hydroxymethyltransferase (426 aa).

Residues Leu113 and 117-119 (GHL) contribute to the (6S)-5,6,7,8-tetrahydrofolate site. Lys222 carries the post-translational modification N6-(pyridoxal phosphate)lysine. 363–365 (SAF) is a binding site for (6S)-5,6,7,8-tetrahydrofolate.

It belongs to the SHMT family. In terms of assembly, homodimer. It depends on pyridoxal 5'-phosphate as a cofactor.

It is found in the cytoplasm. It catalyses the reaction (6R)-5,10-methylene-5,6,7,8-tetrahydrofolate + glycine + H2O = (6S)-5,6,7,8-tetrahydrofolate + L-serine. It functions in the pathway one-carbon metabolism; tetrahydrofolate interconversion. The protein operates within amino-acid biosynthesis; glycine biosynthesis; glycine from L-serine: step 1/1. In terms of biological role, catalyzes the reversible interconversion of serine and glycine with tetrahydrofolate (THF) serving as the one-carbon carrier. This reaction serves as the major source of one-carbon groups required for the biosynthesis of purines, thymidylate, methionine, and other important biomolecules. Also exhibits THF-independent aldolase activity toward beta-hydroxyamino acids, producing glycine and aldehydes, via a retro-aldol mechanism. The polypeptide is Serine hydroxymethyltransferase (Phocaeicola vulgatus (strain ATCC 8482 / DSM 1447 / JCM 5826 / CCUG 4940 / NBRC 14291 / NCTC 11154) (Bacteroides vulgatus)).